The primary structure comprises 328 residues: Delta(3,5)-Delta(2,4)-dienoyl-CoA isomerase, mitochondrial (328 aa).

The transit peptide at 1-33 (MAAGIVASRRLRDLLTRRLTGSNYPGLSISLRL) directs the protein to the mitochondrion. Substrate contacts are provided by residues 116–120 (AGIDL) and Gly-174. Lys-231 bears the N6-succinyllysine mark. At Ser-268 the chain carries Phosphoserine. The Microbody targeting signal signature appears at 326-328 (SKL). An N6-acetyllysine modification is found at Lys-327.

It belongs to the enoyl-CoA hydratase/isomerase family. In terms of assembly, homohexamer.

The protein localises to the mitochondrion. Its subcellular location is the peroxisome. It carries out the reaction (3E,5Z)-octadienoyl-CoA = (2E,4E)-octadienoyl-CoA. The enzyme catalyses (3E,5Z,8Z,11Z,14Z)-eicosapentaenoyl-CoA = (2E,4E,8Z,11Z,14Z)-eicosapentaenoyl-CoA. Its pathway is lipid metabolism; fatty acid beta-oxidation. In terms of biological role, isomerization of 3-trans,5-cis-dienoyl-CoA to 2-trans,4-trans-dienoyl-CoA. This is Delta(3,5)-Delta(2,4)-dienoyl-CoA isomerase, mitochondrial from Homo sapiens (Human).